Here is an 81-residue protein sequence, read N- to C-terminus: MAHSVKIYDTCIGCTQCVRACPTDVLEMIPWEGCKAKQIASAPRTEDCAGCKRCESACPTDFLSVRVYLWHETTRSMGLAY.

2 consecutive 4Fe-4S ferredoxin-type domains span residues 2–31 (AHSV…MIPW) and 39–68 (IASA…VRVY). Positions 11, 14, 17, 21, 48, 51, 54, and 58 each coordinate [4Fe-4S] cluster.

The eukaryotic PSI reaction center is composed of at least 11 subunits. [4Fe-4S] cluster is required as a cofactor.

Its subcellular location is the plastid. It localises to the chloroplast thylakoid membrane. The enzyme catalyses reduced [plastocyanin] + hnu + oxidized [2Fe-2S]-[ferredoxin] = oxidized [plastocyanin] + reduced [2Fe-2S]-[ferredoxin]. Functionally, apoprotein for the two 4Fe-4S centers FA and FB of photosystem I (PSI); essential for photochemical activity. FB is the terminal electron acceptor of PSI, donating electrons to ferredoxin. The C-terminus interacts with PsaA/B/D and helps assemble the protein into the PSI complex. Required for binding of PsaD and PsaE to PSI. PSI is a plastocyanin-ferredoxin oxidoreductase, converting photonic excitation into a charge separation, which transfers an electron from the donor P700 chlorophyll pair to the spectroscopically characterized acceptors A0, A1, FX, FA and FB in turn. This Pinus thunbergii (Japanese black pine) protein is Photosystem I iron-sulfur center.